We begin with the raw amino-acid sequence, 54 residues long: UPF0391 membrane protein Bpet1858 (54 aa).

The next 2 helical transmembrane spans lie at 5 to 25 (AVVF…GIAA) and 27 to 47 (AAGI…LSIL).

This sequence belongs to the UPF0391 family.

It localises to the cell membrane. This Bordetella petrii (strain ATCC BAA-461 / DSM 12804 / CCUG 43448) protein is UPF0391 membrane protein Bpet1858.